The primary structure comprises 213 residues: ATP synthase peripheral stalk subunit OSCP, mitochondrial (213 aa).

The N-terminal 23 residues, 1-23 (MAAPAVSGFSRQVRCFSTSVVRP), are a transit peptide targeting the mitochondrion. The short motif at 5 to 23 (AVSGFSRQVRCFSTSVVRP) is the SIFI-degron element. N6-acetyllysine is present on residues Lys54, Lys60, Lys70, and Lys73. Position 90 is an N6-succinyllysine (Lys90). Lys100 and Lys158 each carry N6-acetyllysine; alternate. Lys100 and Lys158 each carry N6-succinyllysine; alternate. N6-acetyllysine is present on residues Lys172, Lys176, and Lys192. Lys199 is modified (N6-succinyllysine).

This sequence belongs to the ATPase delta chain family. Component of the ATP synthase complex composed at least of ATP5F1A/subunit alpha, ATP5F1B/subunit beta, ATP5MC1/subunit c (homooctomer), MT-ATP6/subunit a, MT-ATP8/subunit 8, ATP5ME/subunit e, ATP5MF/subunit f, ATP5MG/subunit g, ATP5MK/subunit k, ATP5MJ/subunit j, ATP5F1C/subunit gamma, ATP5F1D/subunit delta, ATP5F1E/subunit epsilon, ATP5PF/subunit F6, ATP5PB/subunit b, ATP5PD/subunit d, ATP5PO/subunit OSCP. ATP synthase complex consists of a soluble F(1) head domain (subunits alpha(3) and beta(3)) - the catalytic core - and a membrane F(0) domain - the membrane proton channel (subunits c, a, 8, e, f, g, k and j). These two domains are linked by a central stalk (subunits gamma, delta, and epsilon) rotating inside the F1 region and a stationary peripheral stalk (subunits F6, b, d, and OSCP). In response to mitochondrial stress, the precursor protein is ubiquitinated by the SIFI complex in the cytoplasm before mitochondrial import, leading to its degradation. Within the SIFI complex, UBR4 initiates ubiquitin chain that are further elongated or branched by KCMF1.

The protein localises to the mitochondrion. Its subcellular location is the mitochondrion inner membrane. Functionally, subunit OSCP, of the mitochondrial membrane ATP synthase complex (F(1)F(0) ATP synthase or Complex V) that produces ATP from ADP in the presence of a proton gradient across the membrane which is generated by electron transport complexes of the respiratory chain. ATP synthase complex consist of a soluble F(1) head domain - the catalytic core - and a membrane F(1) domain - the membrane proton channel. These two domains are linked by a central stalk rotating inside the F(1) region and a stationary peripheral stalk. During catalysis, ATP synthesis in the catalytic domain of F(1) is coupled via a rotary mechanism of the central stalk subunits to proton translocation. In vivo, can only synthesize ATP although its ATP hydrolase activity can be activated artificially in vitro. Part of the complex F(0) domain. Part of the complex F(0) domain and the peripheric stalk, which acts as a stator to hold the catalytic alpha(3)beta(3) subcomplex and subunit a/ATP6 static relative to the rotary elements. The polypeptide is ATP synthase peripheral stalk subunit OSCP, mitochondrial (Rhinolophus ferrumequinum (Greater horseshoe bat)).